We begin with the raw amino-acid sequence, 206 residues long: Dihydrofolate reductase (206 aa).

One can recognise a DHFR domain in the interval 6-204; the sequence is SLTLIVALTT…FDYEFEMWTR (199 aa). Residues Ala-12 and 18–24 each bind NADP(+); that span reads GIGRSNS. Position 32-37 (32-37) interacts with substrate; sequence EISYFK. Position 59-61 (59-61) interacts with NADP(+); the sequence is RKT. Arg-75 provides a ligand contact to substrate. NADP(+) is bound by residues 81–83 and 124–131; these read TRN and GGAQLYKA.

It belongs to the dihydrofolate reductase family.

The catalysed reaction is (6S)-5,6,7,8-tetrahydrofolate + NADP(+) = 7,8-dihydrofolate + NADPH + H(+). The protein operates within cofactor biosynthesis; tetrahydrofolate biosynthesis; 5,6,7,8-tetrahydrofolate from 7,8-dihydrofolate: step 1/1. Key enzyme in folate metabolism. Catalyzes an essential reaction for de novo glycine and purine synthesis, and for DNA precursor synthesis. The protein is Dihydrofolate reductase of Pneumocystis carinii.